The following is a 289-amino-acid chain: Probable endonuclease 4 (289 aa).

The Zn(2+) site is built by histidine 74, histidine 115, glutamate 150, aspartate 184, histidine 187, histidine 218, aspartate 231, histidine 233, and glutamate 263.

Belongs to the AP endonuclease 2 family. It depends on Zn(2+) as a cofactor.

The catalysed reaction is Endonucleolytic cleavage to 5'-phosphooligonucleotide end-products.. In terms of biological role, endonuclease IV plays a role in DNA repair. It cleaves phosphodiester bonds at apurinic or apyrimidinic (AP) sites, generating a 3'-hydroxyl group and a 5'-terminal sugar phosphate. The sequence is that of Probable endonuclease 4 from Mycoplasma mycoides subsp. mycoides SC (strain CCUG 32753 / NCTC 10114 / PG1).